Consider the following 389-residue polypeptide: Na(+)/H(+) antiporter NhaA 1 (389 aa).

11 consecutive transmembrane segments (helical) span residues 14-34, 47-67, 87-107, 117-137, 146-166, 171-191, 197-217, 252-272, 280-300, 321-341, and 356-376; these read AGGI…NSPL, FGMS…FLLI, IFPA…YVAF, GWAI…ALLG, VFLL…IALF, LSTL…MLNA, LIWY…SGVH, VAFA…LEGV, MLPL…IFTF, IFAV…ISSL, and LGIL…LHVS.

It belongs to the NhaA Na(+)/H(+) (TC 2.A.33) antiporter family.

The protein localises to the cell inner membrane. The catalysed reaction is Na(+)(in) + 2 H(+)(out) = Na(+)(out) + 2 H(+)(in). Na(+)/H(+) antiporter that extrudes sodium in exchange for external protons. The polypeptide is Na(+)/H(+) antiporter NhaA 1 (Vibrio vulnificus (strain CMCP6)).